The primary structure comprises 348 residues: Sec-independent protein translocase protein TatC (348 aa).

The next 6 helical transmembrane spans lie at Leu-7–Leu-27, Val-162–Leu-182, Cys-192–Leu-212, Met-244–Leu-264, Tyr-278–Thr-298, and Met-299–Met-319.

This sequence belongs to the TatC family. Forms a complex with TatA.

It is found in the cell membrane. Part of the twin-arginine translocation (Tat) system that transports large folded proteins containing a characteristic twin-arginine motif in their signal peptide across membranes. The sequence is that of Sec-independent protein translocase protein TatC from Akkermansia muciniphila (strain ATCC BAA-835 / DSM 22959 / JCM 33894 / BCRC 81048 / CCUG 64013 / CIP 107961 / Muc).